We begin with the raw amino-acid sequence, 270 residues long: tRNA pseudouridine synthase A (270 aa).

Catalysis depends on D51, which acts as the Nucleophile. Y109 provides a ligand contact to substrate.

It belongs to the tRNA pseudouridine synthase TruA family. In terms of assembly, homodimer.

It catalyses the reaction uridine(38/39/40) in tRNA = pseudouridine(38/39/40) in tRNA. Functionally, formation of pseudouridine at positions 38, 39 and 40 in the anticodon stem and loop of transfer RNAs. This chain is tRNA pseudouridine synthase A, found in Burkholderia lata (strain ATCC 17760 / DSM 23089 / LMG 22485 / NCIMB 9086 / R18194 / 383).